The sequence spans 137 residues: Phosphoribosyl-AMP cyclohydrolase (137 aa).

Residue Asp84 participates in Mg(2+) binding. Position 85 (Cys85) interacts with Zn(2+). Residues Asp86 and Asp88 each coordinate Mg(2+). Zn(2+) is bound by residues Cys101 and Cys108.

This sequence belongs to the PRA-CH family. As to quaternary structure, homodimer. It depends on Mg(2+) as a cofactor. Requires Zn(2+) as cofactor.

It is found in the cytoplasm. The catalysed reaction is 1-(5-phospho-beta-D-ribosyl)-5'-AMP + H2O = 1-(5-phospho-beta-D-ribosyl)-5-[(5-phospho-beta-D-ribosylamino)methylideneamino]imidazole-4-carboxamide. It functions in the pathway amino-acid biosynthesis; L-histidine biosynthesis; L-histidine from 5-phospho-alpha-D-ribose 1-diphosphate: step 3/9. Its function is as follows. Catalyzes the hydrolysis of the adenine ring of phosphoribosyl-AMP. This Prosthecochloris aestuarii (strain DSM 271 / SK 413) protein is Phosphoribosyl-AMP cyclohydrolase.